A 441-amino-acid chain; its full sequence is Serine--tRNA ligase (441 aa).

250–252 (TSE) provides a ligand contact to L-serine. ATP-binding positions include 281 to 283 (RRE) and Val-297. Glu-304 is an L-serine binding site. An ATP-binding site is contributed by 368–371 (EIVS). Position 402 (Thr-402) interacts with L-serine.

Belongs to the class-II aminoacyl-tRNA synthetase family. Type-1 seryl-tRNA synthetase subfamily. In terms of assembly, homodimer. The tRNA molecule binds across the dimer.

It localises to the cytoplasm. The catalysed reaction is tRNA(Ser) + L-serine + ATP = L-seryl-tRNA(Ser) + AMP + diphosphate + H(+). It catalyses the reaction tRNA(Sec) + L-serine + ATP = L-seryl-tRNA(Sec) + AMP + diphosphate + H(+). The protein operates within aminoacyl-tRNA biosynthesis; selenocysteinyl-tRNA(Sec) biosynthesis; L-seryl-tRNA(Sec) from L-serine and tRNA(Sec): step 1/1. Its function is as follows. Catalyzes the attachment of serine to tRNA(Ser). Is also able to aminoacylate tRNA(Sec) with serine, to form the misacylated tRNA L-seryl-tRNA(Sec), which will be further converted into selenocysteinyl-tRNA(Sec). The polypeptide is Serine--tRNA ligase (Thermoplasma volcanium (strain ATCC 51530 / DSM 4299 / JCM 9571 / NBRC 15438 / GSS1)).